A 69-amino-acid polypeptide reads, in one-letter code: Pancreatic propolypeptide YG (69 aa).

It belongs to the NPY family.

It is found in the secreted. This chain is Pancreatic propolypeptide YG, found in Lophius americanus (American angler).